Here is a 35-residue protein sequence, read N- to C-terminus: Photosystem II reaction center protein T (35 aa).

Residues 3–23 (ALVYTFLLVSTLGIIFFAIFF) form a helical membrane-spanning segment.

It belongs to the PsbT family. In terms of assembly, PSII is composed of 1 copy each of membrane proteins PsbA, PsbB, PsbC, PsbD, PsbE, PsbF, PsbH, PsbI, PsbJ, PsbK, PsbL, PsbM, PsbT, PsbY, PsbZ, Psb30/Ycf12, at least 3 peripheral proteins of the oxygen-evolving complex and a large number of cofactors. It forms dimeric complexes.

The protein localises to the plastid. Its subcellular location is the chloroplast thylakoid membrane. Functionally, found at the monomer-monomer interface of the photosystem II (PS II) dimer, plays a role in assembly and dimerization of PSII. PSII is a light-driven water plastoquinone oxidoreductase, using light energy to abstract electrons from H(2)O, generating a proton gradient subsequently used for ATP formation. The chain is Photosystem II reaction center protein T from Cedrus deodara (Deodar cedar).